The following is a 293-amino-acid chain: Ribosomal protein L11 methyltransferase (293 aa).

Threonine 145, glycine 166, aspartate 188, and asparagine 230 together coordinate S-adenosyl-L-methionine.

Belongs to the methyltransferase superfamily. PrmA family.

The protein resides in the cytoplasm. It catalyses the reaction L-lysyl-[protein] + 3 S-adenosyl-L-methionine = N(6),N(6),N(6)-trimethyl-L-lysyl-[protein] + 3 S-adenosyl-L-homocysteine + 3 H(+). Functionally, methylates ribosomal protein L11. This chain is Ribosomal protein L11 methyltransferase, found in Actinobacillus pleuropneumoniae serotype 3 (strain JL03).